Consider the following 244-residue polypeptide: Lymphotoxin-beta (244 aa).

At 1–18 the chain is on the cytoplasmic side; sequence MGALGLEGRGGRLQGRGS. The chain crosses the membrane as a helical; Signal-anchor for type II membrane protein span at residues 19-48; it reads LLLAVAGATSLVTLLLAVPITVLAVLALVP. The Extracellular segment spans residues 49–244; sequence QDQGGLVTET…KTFFGAVMVG (196 aa). One can recognise a THD domain in the interval 88 to 243; that stretch reads PAAHLIGAPL…GKTFFGAVMV (156 aa). N-linked (GlcNAc...) asparagine glycosylation is present at N222.

This sequence belongs to the tumor necrosis factor family. As to quaternary structure, heterotrimer of either two LTB and one LTA subunits or (less prevalent) one LTB and two LTA subunits. In terms of tissue distribution, spleen and thymus.

It localises to the membrane. In terms of biological role, cytokine that binds to LTBR/TNFRSF3. May play a specific role in immune response regulation. Provides the membrane anchor for the attachment of the heterotrimeric complex to the cell surface. Isoform 2 is probably non-functional. The polypeptide is Lymphotoxin-beta (LTB) (Homo sapiens (Human)).